Consider the following 231-residue polypeptide: Lipoprotein-releasing system ATP-binding protein LolD (231 aa).

One can recognise an ABC transporter domain in the interval 9 to 230 (FSLKDVGKEY…LRAGELYDQN (222 aa)). 45-52 (GASGSGKS) serves as a coordination point for ATP.

Belongs to the ABC transporter superfamily. Lipoprotein translocase (TC 3.A.1.125) family. As to quaternary structure, the complex is composed of two ATP-binding proteins (LolD) and two transmembrane proteins (LolC and LolE).

The protein localises to the cell inner membrane. Its function is as follows. Part of the ABC transporter complex LolCDE involved in the translocation of mature outer membrane-directed lipoproteins, from the inner membrane to the periplasmic chaperone, LolA. Responsible for the formation of the LolA-lipoprotein complex in an ATP-dependent manner. This chain is Lipoprotein-releasing system ATP-binding protein LolD, found in Oleidesulfovibrio alaskensis (strain ATCC BAA-1058 / DSM 17464 / G20) (Desulfovibrio alaskensis).